A 143-amino-acid polypeptide reads, in one-letter code: Transcriptional regulator MraZ (143 aa).

SpoVT-AbrB domains follow at residues 5–47 and 76–119; these read EYEH…TLEE and AVEV…DRAS.

This sequence belongs to the MraZ family. As to quaternary structure, forms oligomers.

It is found in the cytoplasm. Its subcellular location is the nucleoid. The sequence is that of Transcriptional regulator MraZ from Staphylococcus carnosus (strain TM300).